The chain runs to 422 residues: ATP-dependent RNA helicase RhlB (422 aa).

The Q motif signature appears at 9 to 37 (QKFSDFALHPLVIKAIENQGFYHCTPIQA). The region spanning 40–219 (FPITLAGRDV…FEQMNHPEYI (180 aa)) is the Helicase ATP-binding domain. 53 to 60 (AQTGTGKT) serves as a coordination point for ATP. Residues 165–168 (DEAD) carry the DEAD box motif. The Helicase C-terminal domain maps to 245–390 (RLLQTLIEEE…TSEYNKEALL (146 aa)). The tract at residues 394–422 (PQPKRLQRHHRHYAGSRNQGASRKPRSPQ) is disordered. The segment covering 398 to 407 (RLQRHHRHYA) has biased composition (basic residues).

The protein belongs to the DEAD box helicase family. RhlB subfamily. Component of the RNA degradosome, which is a multiprotein complex involved in RNA processing and mRNA degradation.

The protein resides in the cytoplasm. The catalysed reaction is ATP + H2O = ADP + phosphate + H(+). Functionally, DEAD-box RNA helicase involved in RNA degradation. Has RNA-dependent ATPase activity and unwinds double-stranded RNA. The protein is ATP-dependent RNA helicase RhlB of Hamiltonella defensa subsp. Acyrthosiphon pisum (strain 5AT).